The sequence spans 60 residues: INVPLTRHKSMRESLREKGIELPYQDPAIKYRPEFATANYMYINQYADTIYYGAISIGTP.

Positions 1–35 are cleaved as a propeptide — activation peptide; that stretch reads INVPLTRHKSMRESLREKGIELPYQDPAIKYRPEF.

It belongs to the peptidase A1 family.

The protein is Pepsin-3 of Thunnus orientalis (North Pacific bluefin tuna).